Here is a 364-residue protein sequence, read N- to C-terminus: Probable dual-specificity RNA methyltransferase RlmN (364 aa).

The active-site Proton acceptor is the glutamate 107. The region spanning 113–346 is the Radical SAM core domain; that stretch reads HDYGNSVCVT…ATIRREQGSD (234 aa). Cysteine 120 and cysteine 351 form a disulfide bridge. Residues cysteine 127, cysteine 131, and cysteine 134 each coordinate [4Fe-4S] cluster. S-adenosyl-L-methionine-binding positions include 177-178, serine 209, 232-234, and asparagine 308; these read GE and SLH. The active-site S-methylcysteine intermediate is cysteine 351.

Belongs to the radical SAM superfamily. RlmN family. It depends on [4Fe-4S] cluster as a cofactor.

Its subcellular location is the cytoplasm. The enzyme catalyses adenosine(2503) in 23S rRNA + 2 reduced [2Fe-2S]-[ferredoxin] + 2 S-adenosyl-L-methionine = 2-methyladenosine(2503) in 23S rRNA + 5'-deoxyadenosine + L-methionine + 2 oxidized [2Fe-2S]-[ferredoxin] + S-adenosyl-L-homocysteine. It carries out the reaction adenosine(37) in tRNA + 2 reduced [2Fe-2S]-[ferredoxin] + 2 S-adenosyl-L-methionine = 2-methyladenosine(37) in tRNA + 5'-deoxyadenosine + L-methionine + 2 oxidized [2Fe-2S]-[ferredoxin] + S-adenosyl-L-homocysteine. In terms of biological role, specifically methylates position 2 of adenine 2503 in 23S rRNA and position 2 of adenine 37 in tRNAs. Confers resistance to some classes of antibiotics. The polypeptide is Probable dual-specificity RNA methyltransferase RlmN (Staphylococcus haemolyticus (strain JCSC1435)).